Reading from the N-terminus, the 103-residue chain is Large ribosomal subunit protein uL24 (103 aa).

It belongs to the universal ribosomal protein uL24 family. In terms of assembly, part of the 50S ribosomal subunit.

Its function is as follows. One of two assembly initiator proteins, it binds directly to the 5'-end of the 23S rRNA, where it nucleates assembly of the 50S subunit. Functionally, one of the proteins that surrounds the polypeptide exit tunnel on the outside of the subunit. The chain is Large ribosomal subunit protein uL24 from Dehalococcoides mccartyi (strain ATCC BAA-2266 / KCTC 15142 / 195) (Dehalococcoides ethenogenes (strain 195)).